The sequence spans 436 residues: Trigger factor (436 aa).

The region spanning 163–248 (GDRATIDFEG…VKKIEAAHLP (86 aa)) is the PPIase FKBP-type domain.

Belongs to the FKBP-type PPIase family. Tig subfamily.

It is found in the cytoplasm. It carries out the reaction [protein]-peptidylproline (omega=180) = [protein]-peptidylproline (omega=0). Involved in protein export. Acts as a chaperone by maintaining the newly synthesized protein in an open conformation. Functions as a peptidyl-prolyl cis-trans isomerase. The polypeptide is Trigger factor (Polaromonas sp. (strain JS666 / ATCC BAA-500)).